Reading from the N-terminus, the 238-residue chain is 1-(5-phosphoribosyl)-5-[(5-phosphoribosylamino)methylideneamino] imidazole-4-carboxamide isomerase (238 aa).

The Proton acceptor role is filled by Asp-8. Asp-129 (proton donor) is an active-site residue.

Belongs to the HisA/HisF family.

It localises to the cytoplasm. The enzyme catalyses 1-(5-phospho-beta-D-ribosyl)-5-[(5-phospho-beta-D-ribosylamino)methylideneamino]imidazole-4-carboxamide = 5-[(5-phospho-1-deoxy-D-ribulos-1-ylimino)methylamino]-1-(5-phospho-beta-D-ribosyl)imidazole-4-carboxamide. The protein operates within amino-acid biosynthesis; L-histidine biosynthesis; L-histidine from 5-phospho-alpha-D-ribose 1-diphosphate: step 4/9. In Myxococcus xanthus (strain DK1622), this protein is 1-(5-phosphoribosyl)-5-[(5-phosphoribosylamino)methylideneamino] imidazole-4-carboxamide isomerase.